A 475-amino-acid chain; its full sequence is FAD-dependent monooxygenase janM (475 aa).

A helical transmembrane segment spans residues 8–24 (VIIVGGSIGGLTLAHCL). FAD contacts are provided by E35, G49, and R108. N-linked (GlcNAc...) asparagine glycosylation is present at N147. FAD contacts are provided by D299 and A312. Residues 432–451 (GWRFHAMLCILMLAILYTWV) form a helical membrane-spanning segment.

Belongs to the paxM FAD-dependent monooxygenase family. Requires FAD as cofactor.

The protein resides in the membrane. Its pathway is secondary metabolite biosynthesis. Its function is as follows. FAD-dependent monooxygenase; part of the gene cluster that mediates the biosynthesis of the indole diterpenes janthitremanes such as shearinine K or shearinine A. The geranylgeranyl diphosphate (GGPP) synthase janG catalyzes the first step in janthitremane biosynthesis via conversion of farnesyl pyrophosphate and isopentyl pyrophosphate into geranylgeranyl pyrophosphate (GGPP). Condensation of indole-3-glycerol phosphate with GGPP by the prenyl transferase janC then forms 3-geranylgeranylindole (3-GGI). Epoxidation by the FAD-dependent monooxygenase janM leads to a epoxidized-GGI that is substrate of the terpene cyclase janB for cyclization to yield paspaline. Paspaline is subsequently converted to 13-desoxypaspaline by the cytochrome P450 monooxygenase janP, via beta-PC-M6 in a series of alpha-face oxidations. The cytochrome P450 monooxygenase janQ is proposed to carry out sequential beta-face oxidation steps at C-7 and C-13 of 13-desoxypaspaline to form paspalicine and paspalinine respectively. The indole diterpene prenyltransferase janD may then convert paspalinine into shearinine K which is substrate of janO and/or additional enzymes for oxidation and cyclization to generate shearinine A. This chain is FAD-dependent monooxygenase janM, found in Penicillium janthinellum (Penicillium vitale).